A 633-amino-acid polypeptide reads, in one-letter code: Extracellular metalloproteinase 3 (633 aa).

The first 18 residues, 1–18, serve as a signal peptide directing secretion; the sequence is MHGLLLAGLLALPMNVLA. A propeptide spanning residues 19 to 246 is cleaved from the precursor; that stretch reads HPAEQHASNV…VHNVVDYVAS (228 aa). N410 carries an N-linked (GlcNAc...) asparagine glycan. H429 is a binding site for Zn(2+). E430 is an active-site residue. H433 lines the Zn(2+) pocket. N480 and N622 each carry an N-linked (GlcNAc...) asparagine glycan.

This sequence belongs to the peptidase M36 family. Zn(2+) is required as a cofactor.

The protein localises to the secreted. In terms of biological role, secreted metalloproteinase probably acting as a virulence factor. The protein is Extracellular metalloproteinase 3 (MEP3) of Arthroderma benhamiae (Trichophyton mentagrophytes).